The primary structure comprises 354 residues: Uroporphyrinogen decarboxylase (354 aa).

Substrate contacts are provided by residues 27-31 (RQAGR), aspartate 77, tyrosine 154, threonine 209, and histidine 327.

This sequence belongs to the uroporphyrinogen decarboxylase family. As to quaternary structure, homodimer.

The protein resides in the cytoplasm. It carries out the reaction uroporphyrinogen III + 4 H(+) = coproporphyrinogen III + 4 CO2. Its pathway is porphyrin-containing compound metabolism; protoporphyrin-IX biosynthesis; coproporphyrinogen-III from 5-aminolevulinate: step 4/4. Functionally, catalyzes the decarboxylation of four acetate groups of uroporphyrinogen-III to yield coproporphyrinogen-III. In Mannheimia succiniciproducens (strain KCTC 0769BP / MBEL55E), this protein is Uroporphyrinogen decarboxylase.